The chain runs to 393 residues: Chorismate synthase (393 aa).

2 residues coordinate NADP(+): Arg-40 and Arg-46. FMN-binding positions include 129–131 (RSS), 249–250 (QA), Gly-301, 316–320 (KPIPT), and Arg-342.

Belongs to the chorismate synthase family. Homotetramer. The cofactor is FMNH2.

The enzyme catalyses 5-O-(1-carboxyvinyl)-3-phosphoshikimate = chorismate + phosphate. The protein operates within metabolic intermediate biosynthesis; chorismate biosynthesis; chorismate from D-erythrose 4-phosphate and phosphoenolpyruvate: step 7/7. Its function is as follows. Catalyzes the anti-1,4-elimination of the C-3 phosphate and the C-6 proR hydrogen from 5-enolpyruvylshikimate-3-phosphate (EPSP) to yield chorismate, which is the branch point compound that serves as the starting substrate for the three terminal pathways of aromatic amino acid biosynthesis. This reaction introduces a second double bond into the aromatic ring system. This is Chorismate synthase from Geotalea uraniireducens (strain Rf4) (Geobacter uraniireducens).